Consider the following 147-residue polypeptide: MKNATFYLLDNDTTVDGLSAVEQLVCEIAAERWRSGKRVLIACEDEKQAYRLDEALWARPAESFVPHNLAGEGPRGGAPVEIAWPQKRSSSRRDILISLRTSFADFATAFTEVVDFVPYEDSLKQLARERYKAYRVAGFNLNTATWK.

The protein belongs to the DNA polymerase III chi/HolC chain family. In terms of assembly, the DNA polymerase III holoenzyme complex contains at least 10 different subunits organized into 3 functionally essential subassemblies: the Pol III core, the beta sliding clamp processivity factor and the clamp-loading complex. The Pol III core (subunits alpha, epsilon and theta) contains the polymerase and the 3'-5' exonuclease proofreading activities. The polymerase is tethered to the template via the dimeric beta sliding clamp processivity factor. The clamp-loading complex (also called gamma complex) assembles the beta sliding clamp onto the primed template and plays a central role in the organization and communication at the replication fork. The clamp-loading complex contains delta, delta', psi and chi, and 3 copies of either or both of two different DnaX proteins, gamma and tau. The DNA replisome complex has a single clamp loader (3 tau and 1 each of delta, delta', psi and chi subunits) which binds 3 Pol III cores (1 core on the leading strand and 2 on the lagging strand) each with a beta sliding clamp dimer. Additional proteins in the replisome are other copies of gamma, psi (holD) and chi (this protein), SSB, DNA helicase and RNA primase. The clamp loader hydrolyzes ATP to assemble the beta processivity factor onto the primed template and plays a central role in the organization and communication at the replication fork. The only subunit of the DNA polymerase III holoenzyme known to interact with single-stranded DNA binding protein (SSB). Interacts directly with the psi subunit (holD). Interacts directly with DNA helicase YoaA. It binds to HolD and YoaA, but not both simultaneously.

It catalyses the reaction DNA(n) + a 2'-deoxyribonucleoside 5'-triphosphate = DNA(n+1) + diphosphate. Its function is as follows. Part of the beta sliding clamp loading complex, which hydrolyzes ATP to load the beta clamp onto primed DNA to form the DNA replication pre-initiation complex. DNA polymerase III is a complex, multichain enzyme responsible for most of the replicative synthesis in bacteria. This DNA polymerase also exhibits 3' to 5' exonuclease activity. Genetically identified as involved in the repair of replication forks and tolerance of the chain-terminating nucleoside analog 3' AZT. This subunit may stabilize YoaA and/or stimulate the helicase activity of YoaA. The chain is DNA polymerase III subunit chi from Escherichia coli (strain K12).